We begin with the raw amino-acid sequence, 325 residues long: Tetraacyldisaccharide 4'-kinase (325 aa).

51 to 58 (VVGGAGKT) is a binding site for ATP.

Belongs to the LpxK family.

It carries out the reaction a lipid A disaccharide + ATP = a lipid IVA + ADP + H(+). It participates in glycolipid biosynthesis; lipid IV(A) biosynthesis; lipid IV(A) from (3R)-3-hydroxytetradecanoyl-[acyl-carrier-protein] and UDP-N-acetyl-alpha-D-glucosamine: step 6/6. Transfers the gamma-phosphate of ATP to the 4'-position of a tetraacyldisaccharide 1-phosphate intermediate (termed DS-1-P) to form tetraacyldisaccharide 1,4'-bis-phosphate (lipid IVA). The sequence is that of Tetraacyldisaccharide 4'-kinase from Paramagnetospirillum magneticum (strain ATCC 700264 / AMB-1) (Magnetospirillum magneticum).